A 214-amino-acid polypeptide reads, in one-letter code: Small ribosomal subunit protein uS2 (214 aa).

The protein belongs to the universal ribosomal protein uS2 family.

The sequence is that of Small ribosomal subunit protein uS2 from Methanococcoides burtonii (strain DSM 6242 / NBRC 107633 / OCM 468 / ACE-M).